The sequence spans 233 residues: 27 kDa hemolymph glycoprotein (233 aa).

Positions 1 to 17 (MIWKTLIVAFMATAVLA) are cleaved as a signal peptide. Residues N125 and N156 are each glycosylated (N-linked (GlcNAc...) asparagine).

This sequence belongs to the UPF0408 family. N-glycosylated. In terms of tissue distribution, hemolymph.

The protein localises to the secreted. This Manduca sexta (Tobacco hawkmoth) protein is 27 kDa hemolymph glycoprotein.